The sequence spans 430 residues: Probable acetate kinase (430 aa).

Asparagine 12 contributes to the Mg(2+) binding site. Lysine 19 contacts ATP. Arginine 100 lines the substrate pocket. Aspartate 159 serves as the catalytic Proton donor/acceptor. 220–224 (HLGSG) serves as a coordination point for ATP. Glutamate 416 is a binding site for Mg(2+).

Belongs to the acetokinase family. The cofactor is Mg(2+).

It catalyses the reaction acetate + ATP = acetyl phosphate + ADP. It participates in metabolic intermediate biosynthesis; acetyl-CoA biosynthesis; acetyl-CoA from acetate: step 1/2. The protein is Probable acetate kinase of Cryptococcus neoformans var. neoformans serotype D (strain B-3501A) (Filobasidiella neoformans).